We begin with the raw amino-acid sequence, 869 residues long: Kinesin-like protein KIN-10A (869 aa).

The segment covering 1–36 has biased composition (polar residues); that stretch reads MAPTPSSSRSNQTQYTLIRTPQTKQRLNFHSKTPNP. The interval 1–50 is disordered; the sequence is MAPTPSSSRSNQTQYTLIRTPQTKQRLNFHSKTPNPDGSKDPSPPEHPVE. A compositionally biased stretch (basic and acidic residues) spans 38-50; sequence GSKDPSPPEHPVE. Residues 48–367 form the Kinesin motor domain; it reads PVEVIGRIRD…LEYGAKAKCI (320 aa). 129-136 provides a ligand contact to ATP; it reads GPTGAGKS. The stretch at 393–515 forms a coiled coil; it reads RIAAMDEFII…EIEVEFRRSN (123 aa).

Belongs to the TRAFAC class myosin-kinesin ATPase superfamily. Kinesin family. KIN-10 subfamily. Binds microtubules.

Its subcellular location is the cytoplasm. The protein localises to the cytoskeleton. It is found in the phragmoplast. Probable plus end-directed motor protein that may contribute to the transport of Golgi-derived vesicles in the phragmoplast. The chain is Kinesin-like protein KIN-10A from Arabidopsis thaliana (Mouse-ear cress).